A 202-amino-acid chain; its full sequence is Urease accessory protein UreG (202 aa).

11 to 18 (GPVGSGKT) is a binding site for GTP.

The protein belongs to the SIMIBI class G3E GTPase family. UreG subfamily. As to quaternary structure, homodimer. UreD, UreF and UreG form a complex that acts as a GTP-hydrolysis-dependent molecular chaperone, activating the urease apoprotein by helping to assemble the nickel containing metallocenter of UreC. The UreE protein probably delivers the nickel.

Its subcellular location is the cytoplasm. Functionally, facilitates the functional incorporation of the urease nickel metallocenter. This process requires GTP hydrolysis, probably effectuated by UreG. This Magnetococcus marinus (strain ATCC BAA-1437 / JCM 17883 / MC-1) protein is Urease accessory protein UreG.